The following is a 218-amino-acid chain: Phosphoribosylformylglycinamidine synthase subunit PurQ (218 aa).

A Glutamine amidotransferase type-1 domain is found at 2-218; the sequence is TIGIVVFPGS…IKILQALLSN (217 aa). The Nucleophile role is filled by Cys-86. Active-site residues include His-194 and Glu-196.

Part of the FGAM synthase complex composed of 1 PurL, 1 PurQ and 2 PurS subunits.

Its subcellular location is the cytoplasm. It carries out the reaction N(2)-formyl-N(1)-(5-phospho-beta-D-ribosyl)glycinamide + L-glutamine + ATP + H2O = 2-formamido-N(1)-(5-O-phospho-beta-D-ribosyl)acetamidine + L-glutamate + ADP + phosphate + H(+). The catalysed reaction is L-glutamine + H2O = L-glutamate + NH4(+). Its pathway is purine metabolism; IMP biosynthesis via de novo pathway; 5-amino-1-(5-phospho-D-ribosyl)imidazole from N(2)-formyl-N(1)-(5-phospho-D-ribosyl)glycinamide: step 1/2. Part of the phosphoribosylformylglycinamidine synthase complex involved in the purines biosynthetic pathway. Catalyzes the ATP-dependent conversion of formylglycinamide ribonucleotide (FGAR) and glutamine to yield formylglycinamidine ribonucleotide (FGAM) and glutamate. The FGAM synthase complex is composed of three subunits. PurQ produces an ammonia molecule by converting glutamine to glutamate. PurL transfers the ammonia molecule to FGAR to form FGAM in an ATP-dependent manner. PurS interacts with PurQ and PurL and is thought to assist in the transfer of the ammonia molecule from PurQ to PurL. The polypeptide is Phosphoribosylformylglycinamidine synthase subunit PurQ (Prochlorococcus marinus (strain SARG / CCMP1375 / SS120)).